The sequence spans 161 residues: Cyclic pyranopterin monophosphate synthase (161 aa).

Residues 75–77 (LCH) and 113–114 (ME) each bind substrate. The active site involves aspartate 128.

Belongs to the MoaC family. As to quaternary structure, homohexamer; trimer of dimers.

It catalyses the reaction (8S)-3',8-cyclo-7,8-dihydroguanosine 5'-triphosphate = cyclic pyranopterin phosphate + diphosphate. It participates in cofactor biosynthesis; molybdopterin biosynthesis. In terms of biological role, catalyzes the conversion of (8S)-3',8-cyclo-7,8-dihydroguanosine 5'-triphosphate to cyclic pyranopterin monophosphate (cPMP). The polypeptide is Cyclic pyranopterin monophosphate synthase (Erwinia tasmaniensis (strain DSM 17950 / CFBP 7177 / CIP 109463 / NCPPB 4357 / Et1/99)).